Consider the following 359-residue polypeptide: Membrane-bound lytic murein transglycosylase C (359 aa).

An N-terminal signal peptide occupies residues 1–16 (MKKYLALALIAPLLIS). The N-palmitoyl cysteine moiety is linked to residue Cys17. A lipid anchor (S-diacylglycerol cysteine) is attached at Cys17.

It belongs to the transglycosylase Slt family.

It localises to the cell outer membrane. The catalysed reaction is Exolytic cleavage of the (1-&gt;4)-beta-glycosidic linkage between N-acetylmuramic acid (MurNAc) and N-acetylglucosamine (GlcNAc) residues in peptidoglycan, from either the reducing or the non-reducing ends of the peptidoglycan chains, with concomitant formation of a 1,6-anhydrobond in the MurNAc residue.. Its function is as follows. Murein-degrading enzyme. May play a role in recycling of muropeptides during cell elongation and/or cell division. This Escherichia fergusonii (strain ATCC 35469 / DSM 13698 / CCUG 18766 / IAM 14443 / JCM 21226 / LMG 7866 / NBRC 102419 / NCTC 12128 / CDC 0568-73) protein is Membrane-bound lytic murein transglycosylase C.